The primary structure comprises 275 residues: Ribosomal protein L11 methyltransferase (275 aa).

Residues T130, G151, D172, and N213 each contribute to the S-adenosyl-L-methionine site.

It belongs to the methyltransferase superfamily. PrmA family.

Its subcellular location is the cytoplasm. The catalysed reaction is L-lysyl-[protein] + 3 S-adenosyl-L-methionine = N(6),N(6),N(6)-trimethyl-L-lysyl-[protein] + 3 S-adenosyl-L-homocysteine + 3 H(+). In terms of biological role, methylates ribosomal protein L11. This chain is Ribosomal protein L11 methyltransferase, found in Wolinella succinogenes (strain ATCC 29543 / DSM 1740 / CCUG 13145 / JCM 31913 / LMG 7466 / NCTC 11488 / FDC 602W) (Vibrio succinogenes).